A 430-amino-acid polypeptide reads, in one-letter code: Dihydroorotase (430 aa).

Zn(2+)-binding residues include H61 and H63. Substrate-binding positions include H63–R65 and N95. The Zn(2+) site is built by D153, H180, and H233. Residue N279 coordinates substrate. D306 provides a ligand contact to Zn(2+). D306 is a catalytic residue. Substrate is bound by residues H310 and F324–G325.

The protein belongs to the metallo-dependent hydrolases superfamily. DHOase family. Class I DHOase subfamily. The cofactor is Zn(2+).

It catalyses the reaction (S)-dihydroorotate + H2O = N-carbamoyl-L-aspartate + H(+). It participates in pyrimidine metabolism; UMP biosynthesis via de novo pathway; (S)-dihydroorotate from bicarbonate: step 3/3. Catalyzes the reversible cyclization of carbamoyl aspartate to dihydroorotate. In Lactiplantibacillus plantarum (strain ATCC BAA-793 / NCIMB 8826 / WCFS1) (Lactobacillus plantarum), this protein is Dihydroorotase.